The sequence spans 592 residues: Insulin-like growth factor 2 mRNA-binding protein 2 (592 aa).

2 consecutive RRM domains span residues 3–76 (NKLY…YSVS) and 82–157 (RRIQ…YIPD). At Ser-11 the chain carries Phosphoserine. The disordered stretch occupies residues 157–182 (DEEVSSPSPPHRAREQGHGPGSSSQA). Phosphoserine is present on residues Ser-162 and Ser-164. KH domains lie at 186–251 (DFPL…CRMI), 267–334 (EVPL…EIEI), 420–485 (QETV…QGRI), and 502–568 (KLEA…QRKI). A Phosphothreonine modification is found at Thr-543.

The protein belongs to the RRM IMP/VICKZ family. Can form homooligomers and heterooligomers with IGF2BP1 and IGF2BP3 in an RNA-dependent manner. Interacts with HNRPD. Interacts with IGF2BP1. Interacts with ELAVL1, DHX9, HNRNPU, MATR3 and PABPC1. In terms of tissue distribution, expressed in oocytes, granulosa cells of small and growing follicles and Leydig cells of the testis (at protein level). Expressed in testis and ovary.

It is found in the nucleus. It localises to the cytoplasm. The protein localises to the P-body. Its subcellular location is the stress granule. Its function is as follows. RNA-binding factor that recruits target transcripts to cytoplasmic protein-RNA complexes (mRNPs). This transcript 'caging' into mRNPs allows mRNA transport and transient storage. It also modulates the rate and location at which target transcripts encounter the translational apparatus and shields them from endonuclease attacks or microRNA-mediated degradation. Preferentially binds to N6-methyladenosine (m6A)-containing mRNAs and increases their stability. Binds to the 5'-UTR of the insulin-like growth factor 2 (IGF2) mRNAs. Binding is isoform-specific. Binds to beta-actin/ACTB and MYC transcripts. Increases MYC mRNA stability by binding to the coding region instability determinant (CRD) and binding is enhanced by m6A-modification of the CRD. The sequence is that of Insulin-like growth factor 2 mRNA-binding protein 2 (Igf2bp2) from Mus musculus (Mouse).